A 524-amino-acid polypeptide reads, in one-letter code: Cytosolic Fe-S cluster assembly factor NAR1 (524 aa).

Residues C20, C52, C55, C58, C158, and C206 each coordinate [4Fe-4S] cluster. The segment at 362–388 is disordered; the sequence is IRKRPTANGNDNSISLSSSINNQDNNN. Low complexity predominate over residues 369–388; that stretch reads NGNDNSISLSSSINNQDNNN. 2 residues coordinate [4Fe-4S] cluster: C408 and C412. Positions 501–524 are disordered; sequence SSISETHNGDSKNTIEQPVQFTTW.

The protein belongs to the NARF family.

In terms of biological role, component of the cytosolic Fe/S protein assembly machinery. Required for maturation of extramitochondrial Fe/S proteins. May play a role in the transfer of pre-assembled Fe/S clusters to target apoproteins. The sequence is that of Cytosolic Fe-S cluster assembly factor NAR1 (NAR1) from Vanderwaltozyma polyspora (strain ATCC 22028 / DSM 70294 / BCRC 21397 / CBS 2163 / NBRC 10782 / NRRL Y-8283 / UCD 57-17) (Kluyveromyces polysporus).